We begin with the raw amino-acid sequence, 355 residues long: Tetraacyldisaccharide 4'-kinase (355 aa).

54–61 (TVGGAGKT) contributes to the ATP binding site.

It belongs to the LpxK family.

It carries out the reaction a lipid A disaccharide + ATP = a lipid IVA + ADP + H(+). It functions in the pathway glycolipid biosynthesis; lipid IV(A) biosynthesis; lipid IV(A) from (3R)-3-hydroxytetradecanoyl-[acyl-carrier-protein] and UDP-N-acetyl-alpha-D-glucosamine: step 6/6. Its function is as follows. Transfers the gamma-phosphate of ATP to the 4'-position of a tetraacyldisaccharide 1-phosphate intermediate (termed DS-1-P) to form tetraacyldisaccharide 1,4'-bis-phosphate (lipid IVA). The chain is Tetraacyldisaccharide 4'-kinase from Rhizobium rhizogenes (strain K84 / ATCC BAA-868) (Agrobacterium radiobacter).